We begin with the raw amino-acid sequence, 231 residues long: Lytic polysaccharide monooxygenase-like protein X325 (231 aa).

The first 17 residues, Met1 to Ala17, serve as a signal peptide directing secretion. His18 is a Cu(2+) binding site. Asn34, Asn55, Asn98, Asn133, Asn174, and Asn180 each carry an N-linked (GlcNAc...) asparagine glycan. Disulfide bonds link Cys47–Cys157 and Cys122–Cys178. Ile202 carries the GPI-anchor amidated isoleucine lipid modification. The propeptide at Ala203 to Leu231 is removed in mature form.

Belongs to the X325 family. Cu(2+) is required as a cofactor.

The protein resides in the cell membrane. Functionally, lytic polysaccharide monooxygenase-like protein that has diverged to biological functions other than polysaccharide degradation since it does not perform oxidative cleavage of polysaccharides. Acts as a cell surface-bound protein that functions in the copper-accumulation pathway. May also act as the major cell wall sensor that regulates MAP kinase-dependent hyphal anastomosis, the fusion of hyphal cells. In Hypocrea jecorina (strain QM6a) (Trichoderma reesei), this protein is Lytic polysaccharide monooxygenase-like protein X325.